A 296-amino-acid chain; its full sequence is Nucleotide-binding protein MGAS2096_Spy0550 (296 aa).

Residue glycine 13–threonine 20 coordinates ATP. Aspartate 63–serine 66 contributes to the GTP binding site.

It belongs to the RapZ-like family.

In terms of biological role, displays ATPase and GTPase activities. The polypeptide is Nucleotide-binding protein MGAS2096_Spy0550 (Streptococcus pyogenes serotype M12 (strain MGAS2096)).